Here is a 513-residue protein sequence, read N- to C-terminus: ATP synthase subunit alpha (513 aa).

ATP is bound at residue 169-176 (GDRQTGKT).

The protein belongs to the ATPase alpha/beta chains family. In terms of assembly, F-type ATPases have 2 components, CF(1) - the catalytic core - and CF(0) - the membrane proton channel. CF(1) has five subunits: alpha(3), beta(3), gamma(1), delta(1), epsilon(1). CF(0) has three main subunits: a(1), b(2) and c(9-12). The alpha and beta chains form an alternating ring which encloses part of the gamma chain. CF(1) is attached to CF(0) by a central stalk formed by the gamma and epsilon chains, while a peripheral stalk is formed by the delta and b chains.

The protein resides in the cell inner membrane. It catalyses the reaction ATP + H2O + 4 H(+)(in) = ADP + phosphate + 5 H(+)(out). Produces ATP from ADP in the presence of a proton gradient across the membrane. The alpha chain is a regulatory subunit. In Cupriavidus metallidurans (strain ATCC 43123 / DSM 2839 / NBRC 102507 / CH34) (Ralstonia metallidurans), this protein is ATP synthase subunit alpha.